A 150-amino-acid chain; its full sequence is 5-hydroxytryptamine receptor 1B (150 aa).

Topologically, residues 1 to 83 (VEARSRILKQ…AARERKATKT (83 aa)) are extracellular. Positions 27–40 (DSPGSTSSVTSINS) are enriched in polar residues. Residues 27-50 (DSPGSTSSVTSINSRAPDLPSESG) form a disordered region. Residues 84 to 105 (LGIILGAFIVCWLPFFIISLAM) traverse the membrane as a helical segment. Residues 106-115 (PICKDACWFH) lie on the Cytoplasmic side of the membrane. The helical transmembrane segment at 116–138 (LAIFDFFTWLGYLNSLINPIIYT) threads the bilayer. The NPxxY motif; important for ligand-induced conformation changes and signaling signature appears at 133 to 137 (NPIIY). Residues 139 to 150 (MFNEDFKQAFHK) are Extracellular-facing.

Belongs to the G-protein coupled receptor 1 family. As to quaternary structure, homodimer. Heterodimer with HTR1D. Post-translationally, phosphorylated. Desensitization of the receptor may be mediated by its phosphorylation. In terms of processing, palmitoylated.

The protein resides in the cell membrane. G-protein coupled receptor for 5-hydroxytryptamine (serotonin). Also functions as a receptor for ergot alkaloid derivatives, various anxiolytic and antidepressant drugs and other psychoactive substances, such as lysergic acid diethylamide (LSD). Ligand binding causes a conformation change that triggers signaling via guanine nucleotide-binding proteins (G proteins) and modulates the activity of downstream effectors, such as adenylate cyclase. HTR1B is coupled to G(i)/G(o) G alpha proteins and mediates inhibitory neurotransmission by inhibiting adenylate cyclase activity. Arrestin family members inhibit signaling via G proteins and mediate activation of alternative signaling pathways. Regulates the release of 5-hydroxytryptamine, dopamine and acetylcholine in the brain, and thereby affects neural activity, nociceptive processing, pain perception, mood and behavior. Besides, plays a role in vasoconstriction of cerebral arteries. The polypeptide is 5-hydroxytryptamine receptor 1B (HTR1B) (Sus scrofa (Pig)).